The primary structure comprises 903 residues: Protein U7 (903 aa).

The helical transmembrane segment at 665 to 685 (KALLTFLTNIVFIVFVVNTLY) threads the bilayer.

Belongs to the herpesviridae US22 family.

The protein resides in the host membrane. This chain is Protein U7 (U7), found in Human herpesvirus 6B (strain Z29) (HHV-6 variant B).